We begin with the raw amino-acid sequence, 85 residues long: Small ribosomal subunit protein bS18 (85 aa).

It belongs to the bacterial ribosomal protein bS18 family. In terms of assembly, part of the 30S ribosomal subunit. Forms a tight heterodimer with protein bS6.

Functionally, binds as a heterodimer with protein bS6 to the central domain of the 16S rRNA, where it helps stabilize the platform of the 30S subunit. The sequence is that of Small ribosomal subunit protein bS18 from Helicobacter pylori (strain Shi470).